The chain runs to 462 residues: EPD1-interacting receptor-like cytoplasmic serine/threonine-protein kinase 5A (462 aa).

Residues 85–366 (FSSANFLGEG…DVVNILEPLL (282 aa)) form the Protein kinase domain. ATP-binding positions include 91-99 (LGEGGFGPV) and lysine 120. Phosphotyrosine occurs at positions 165 and 167. Catalysis depends on aspartate 215, which acts as the Proton acceptor.

The protein belongs to the protein kinase superfamily. Ser/Thr protein kinase family. In terms of assembly, interacts with the Verticillium dahliae elicitor EPD1 (AC G2WWH6). Post-translationally, phosphorylated at Tyr-165 and Tyr-167 in the presence of pathogen-associated molecular patterns (PAMPs); this triggers the expression of pathogenesis-related genes (e.g. PR5 and PR16). Mostly expressed in roots and, to a lesser extent, in leaves.

It is found in the cell membrane. The enzyme catalyses L-seryl-[protein] + ATP = O-phospho-L-seryl-[protein] + ADP + H(+). It carries out the reaction L-threonyl-[protein] + ATP = O-phospho-L-threonyl-[protein] + ADP + H(+). Functionally, required for pathogen-associated molecular pattern (PAMP, e.g. chitin and flg22)-triggered immunity (PTI) involving reactive oxygen species (ROS) accumulation and triggering plant defense, including defense-related gene expression (e.g. PR1 and LOX). Ensures specific recognition of the EPD1 effector of Verticillium dahliae, resulting in a hypersensitive response known as effector-triggered immunity (ETI), characterized by the activation of programmed cell death to limit infection by the pathogen. Priming plants with the incompatible pathogen V.dahliae leads to an increased resistance to compatible pathogens, as a result of systemic acquired resistance (SAR). The sequence is that of EPD1-interacting receptor-like cytoplasmic serine/threonine-protein kinase 5A from Gossypium barbadense (Sea Island cotton).